Reading from the N-terminus, the 331-residue chain is D-alanine--D-alanine ligase (331 aa).

Positions Lys116–Ala316 constitute an ATP-grasp domain. ATP is bound at residue Ala142 to Thr197. Mg(2+) contacts are provided by Asp269, Glu283, and Asn285.

It belongs to the D-alanine--D-alanine ligase family. Mg(2+) serves as cofactor. The cofactor is Mn(2+).

Its subcellular location is the cytoplasm. The enzyme catalyses 2 D-alanine + ATP = D-alanyl-D-alanine + ADP + phosphate + H(+). It participates in cell wall biogenesis; peptidoglycan biosynthesis. Its function is as follows. Cell wall formation. The chain is D-alanine--D-alanine ligase from Ralstonia pickettii (strain 12J).